Consider the following 131-residue polypeptide: Small ribosomal subunit protein uS11 (131 aa).

This sequence belongs to the universal ribosomal protein uS11 family. In terms of assembly, part of the 30S ribosomal subunit. Interacts with proteins S7 and S18. Binds to IF-3.

Its function is as follows. Located on the platform of the 30S subunit, it bridges several disparate RNA helices of the 16S rRNA. Forms part of the Shine-Dalgarno cleft in the 70S ribosome. The polypeptide is Small ribosomal subunit protein uS11 (Deinococcus deserti (strain DSM 17065 / CIP 109153 / LMG 22923 / VCD115)).